A 369-amino-acid chain; its full sequence is Cobalt-precorrin-5B C(1)-methyltransferase (369 aa).

It belongs to the CbiD family.

The enzyme catalyses Co-precorrin-5B + S-adenosyl-L-methionine = Co-precorrin-6A + S-adenosyl-L-homocysteine. The protein operates within cofactor biosynthesis; adenosylcobalamin biosynthesis; cob(II)yrinate a,c-diamide from sirohydrochlorin (anaerobic route): step 6/10. Catalyzes the methylation of C-1 in cobalt-precorrin-5B to form cobalt-precorrin-6A. In Prosthecochloris aestuarii (strain DSM 271 / SK 413), this protein is Cobalt-precorrin-5B C(1)-methyltransferase.